The chain runs to 338 residues: Peptidoglycan deacetylase-like protein FGM2 (338 aa).

3 residues coordinate Zn(2+): Asp49, His124, and His128. The NodB homology domain occupies Leu65–Ser257.

This sequence belongs to the polysaccharide deacetylase family.

Its function is as follows. Peptidoglycan deacetylase-like protein; part of the Fg3_54/C64 gene cluster that mediates the biosynthesis of the octapeptide fusaoctaxin A, a virulence factor that is required for cell-to-cell invasiveness of plant host. The 2 nonribosomal peptide synthetases NRPS9 and NRPS5 form an assembly line which likely utilizes GABA as a starter unit (loaded on the unique module M1 of NRPS9) and sequentially incorporates seven extender units composed of the residues L-Ala, L-allo-Ile, L-Ser, L-Val, L-Ser, L-Leu and L-Leu, respectively. During the process, each of the residues that are tethered on modules M3-M7 of NRPS5 containing an E domain can undergo an epimerization reaction to produce a D-configuration before the transpeptidation reaction occurs. The elongation of the peptidyl chain might be terminated by module M8-mediated L-Leu incorporation, followed by R domain-catalyzed 4 electron reduction to release the resulting octapeptide from the assembly line as an alcohol. Fusaoctaxin A is cleaved by the cluster specific ABC transporter FGM5 to the pentapeptide fusapentaxin A and the tripeptide fusatrixin A. The other enzymes from the cluster, FGM1, FGM2, FGM3 and FGM9 seem not to be involved in the biosynthesis of fusaoctaxin A and their functions have still to be determined. The chain is Peptidoglycan deacetylase-like protein FGM2 from Gibberella zeae (strain ATCC MYA-4620 / CBS 123657 / FGSC 9075 / NRRL 31084 / PH-1) (Wheat head blight fungus).